Consider the following 185-residue polypeptide: Peptidyl-tRNA hydrolase (185 aa).

A tRNA-binding site is contributed by Tyr14. The active-site Proton acceptor is the His19. Residues Tyr65, Asn67, and Asn113 each coordinate tRNA.

The protein belongs to the PTH family. Monomer.

The protein resides in the cytoplasm. It catalyses the reaction an N-acyl-L-alpha-aminoacyl-tRNA + H2O = an N-acyl-L-amino acid + a tRNA + H(+). Functionally, hydrolyzes ribosome-free peptidyl-tRNAs (with 1 or more amino acids incorporated), which drop off the ribosome during protein synthesis, or as a result of ribosome stalling. Catalyzes the release of premature peptidyl moieties from peptidyl-tRNA molecules trapped in stalled 50S ribosomal subunits, and thus maintains levels of free tRNAs and 50S ribosomes. This chain is Peptidyl-tRNA hydrolase, found in Rickettsia prowazekii (strain Madrid E).